The primary structure comprises 1229 residues: ABC transporter B family member 3 (1229 aa).

A helical transmembrane segment spans residues 22–42; it reads VLLMIVGSIGAIGNGVGFPLM. The ABC transmembrane type-1 1 domain maps to 25–313; sequence MIVGSIGAIG…TTPCLTAFAA (289 aa). N56 carries N-linked (GlcNAc...) asparagine glycosylation. 5 helical membrane passes run 73-93, 149-169, 172-192, 252-272, and 281-301; these read FVYL…CWMI, FIQL…KGWL, LVML…PIIV, GLGL…AIWF, and GYTG…SMSL. The ABC transporter 1 domain maps to 348 to 584; sequence IELRDVCFSY…HEGAYAQLIR (237 aa). Residue 383-390 participates in ATP binding; it reads GESGSGKS. A glycan (N-linked (GlcNAc...) asparagine) is linked at N450. The segment covering 594-606 has biased composition (basic and acidic residues); it reads RLESSNELRDRSI. Residues 594–614 form a disordered region; that stretch reads RLESSNELRDRSINRGSSRNI. N-linked (GlcNAc...) asparagine glycosylation is present at N645. Helical transmembrane passes span 661 to 681 and 706 to 726; these read ILIL…IFGI and MIFV…TYLF. The ABC transmembrane type-1 2 domain occupies 662–949; sequence LILGTLLGAV…ASSFAPDSSK (288 aa). Residue N758 is glycosylated (N-linked (GlcNAc...) asparagine). The next 3 helical transmembrane spans lie at 797–817, 888–908, and 923–943; these read IIAF…IPLI, GVGF…CFYV, and VFQV…ASSF. Positions 984–1222 constitute an ABC transporter 2 domain; that stretch reads IELCHISFTY…EGGVYASLVQ (239 aa). 1019–1026 serves as a coordination point for ATP; it reads GESGSGKS. N1073 and N1173 each carry an N-linked (GlcNAc...) asparagine glycan.

Belongs to the ABC transporter superfamily. ABCB family. Multidrug resistance exporter (TC 3.A.1.201) subfamily.

It localises to the membrane. This is ABC transporter B family member 3 (ABCB3) from Arabidopsis thaliana (Mouse-ear cress).